Consider the following 237-residue polypeptide: Large ribosomal subunit protein uL1 (237 aa).

This sequence belongs to the universal ribosomal protein uL1 family. Part of the 50S ribosomal subunit.

In terms of biological role, binds directly to 23S rRNA. The L1 stalk is quite mobile in the ribosome, and is involved in E site tRNA release. Its function is as follows. Protein L1 is also a translational repressor protein, it controls the translation of the L11 operon by binding to its mRNA. The chain is Large ribosomal subunit protein uL1 from Solibacter usitatus (strain Ellin6076).